A 294-amino-acid chain; its full sequence is 4-hydroxy-tetrahydrodipicolinate synthase (294 aa).

Thr-45 lines the pyruvate pocket. Tyr-133 serves as the catalytic Proton donor/acceptor. The Schiff-base intermediate with substrate role is filled by Lys-162. Residue Ile-204 coordinates pyruvate.

The protein belongs to the DapA family. As to quaternary structure, homotetramer; dimer of dimers.

Its subcellular location is the cytoplasm. The enzyme catalyses L-aspartate 4-semialdehyde + pyruvate = (2S,4S)-4-hydroxy-2,3,4,5-tetrahydrodipicolinate + H2O + H(+). Its pathway is amino-acid biosynthesis; L-lysine biosynthesis via DAP pathway; (S)-tetrahydrodipicolinate from L-aspartate: step 3/4. Functionally, catalyzes the condensation of (S)-aspartate-beta-semialdehyde [(S)-ASA] and pyruvate to 4-hydroxy-tetrahydrodipicolinate (HTPA). This chain is 4-hydroxy-tetrahydrodipicolinate synthase, found in Bartonella tribocorum (strain CIP 105476 / IBS 506).